Reading from the N-terminus, the 408-residue chain is 8-amino-7-oxononanoate synthase (408 aa).

Arginine 20 provides a ligand contact to substrate. Residue 117–118 (GY) participates in pyridoxal 5'-phosphate binding. Histidine 142 lines the substrate pocket. Pyridoxal 5'-phosphate is bound by residues serine 188, histidine 216, and threonine 244. Lysine 247 is modified (N6-(pyridoxal phosphate)lysine). Position 367 (threonine 367) interacts with substrate.

This sequence belongs to the class-II pyridoxal-phosphate-dependent aminotransferase family. BioF subfamily. As to quaternary structure, homodimer. Requires pyridoxal 5'-phosphate as cofactor.

It carries out the reaction 6-carboxyhexanoyl-[ACP] + L-alanine + H(+) = (8S)-8-amino-7-oxononanoate + holo-[ACP] + CO2. It functions in the pathway cofactor biosynthesis; biotin biosynthesis. Functionally, catalyzes the decarboxylative condensation of pimeloyl-[acyl-carrier protein] and L-alanine to produce 8-amino-7-oxononanoate (AON), [acyl-carrier protein], and carbon dioxide. The sequence is that of 8-amino-7-oxononanoate synthase from Cupriavidus pinatubonensis (strain JMP 134 / LMG 1197) (Cupriavidus necator (strain JMP 134)).